A 559-amino-acid polypeptide reads, in one-letter code: Phosphoinositide 3-phosphatase (559 aa).

Residues 120 to 541 enclose the Myotubularin phosphatase domain; sequence SWKSFLLENE…SSLRWWSASF (422 aa). The Phosphocysteine intermediate role is filled by cysteine 342.

This sequence belongs to the protein-tyrosine phosphatase family. Non-receptor class myotubularin subfamily.

Its subcellular location is the cytoplasm. It catalyses the reaction a 1,2-diacyl-sn-glycero-3-phospho-(1D-myo-inositol-3-phosphate) + H2O = a 1,2-diacyl-sn-glycero-3-phospho-(1D-myo-inositol) + phosphate. Its function is as follows. Lipid phosphatase which dephosphorylates phosphatidylinositol 3-monophosphate (PI3P). Involved in the control of PI3P-dependent signaling and in the maintenance of endosomal system integrity. The polypeptide is Phosphoinositide 3-phosphatase (Schizosaccharomyces pombe (strain 972 / ATCC 24843) (Fission yeast)).